Here is a 193-residue protein sequence, read N- to C-terminus: MIGRIAGTLIEKNPPHLLVDCHGVGYEVDVPMSTFYNLPAVGQPVTLLTQLIVREDAHLLYGFGTASERNTFRELIKITGIGARMALAVLSGMSVPELAQAITLQEAGRLTRIPGIGKKTAERLLLELKGKLGAELGHVPGTPAVPDSAVDVLNALLALGYSEKEAAAAIKQVPAGTGVSDGIKLALKALSKA.

The segment at Met1–Gly64 is domain I. The tract at residues Thr65–Pro143 is domain II. Residues Ala144 to Asp151 form a flexible linker region. A domain III region spans residues Asp151–Ala193.

Belongs to the RuvA family. As to quaternary structure, homotetramer. Forms an RuvA(8)-RuvB(12)-Holliday junction (HJ) complex. HJ DNA is sandwiched between 2 RuvA tetramers; dsDNA enters through RuvA and exits via RuvB. An RuvB hexamer assembles on each DNA strand where it exits the tetramer. Each RuvB hexamer is contacted by two RuvA subunits (via domain III) on 2 adjacent RuvB subunits; this complex drives branch migration. In the full resolvosome a probable DNA-RuvA(4)-RuvB(12)-RuvC(2) complex forms which resolves the HJ.

It is found in the cytoplasm. The RuvA-RuvB-RuvC complex processes Holliday junction (HJ) DNA during genetic recombination and DNA repair, while the RuvA-RuvB complex plays an important role in the rescue of blocked DNA replication forks via replication fork reversal (RFR). RuvA specifically binds to HJ cruciform DNA, conferring on it an open structure. The RuvB hexamer acts as an ATP-dependent pump, pulling dsDNA into and through the RuvAB complex. HJ branch migration allows RuvC to scan DNA until it finds its consensus sequence, where it cleaves and resolves the cruciform DNA. The chain is Holliday junction branch migration complex subunit RuvA from Cupriavidus necator (strain ATCC 17699 / DSM 428 / KCTC 22496 / NCIMB 10442 / H16 / Stanier 337) (Ralstonia eutropha).